A 476-amino-acid chain; its full sequence is ATP synthase subunit beta (476 aa).

154 to 161 (GGAGVGKT) contributes to the ATP binding site.

This sequence belongs to the ATPase alpha/beta chains family. In terms of assembly, F-type ATPases have 2 components, CF(1) - the catalytic core - and CF(0) - the membrane proton channel. CF(1) has five subunits: alpha(3), beta(3), gamma(1), delta(1), epsilon(1). CF(0) has four main subunits: a(1), b(1), b'(1) and c(9-12).

It localises to the cell inner membrane. It catalyses the reaction ATP + H2O + 4 H(+)(in) = ADP + phosphate + 5 H(+)(out). Produces ATP from ADP in the presence of a proton gradient across the membrane. The catalytic sites are hosted primarily by the beta subunits. The polypeptide is ATP synthase subunit beta (Rhodopseudomonas palustris (strain BisA53)).